The following is a 136-amino-acid chain: Large ribosomal subunit protein uL16 (136 aa).

This sequence belongs to the universal ribosomal protein uL16 family. As to quaternary structure, part of the 50S ribosomal subunit.

Its function is as follows. Binds 23S rRNA and is also seen to make contacts with the A and possibly P site tRNAs. In Pelagibacter ubique (strain HTCC1062), this protein is Large ribosomal subunit protein uL16.